The primary structure comprises 151 residues: Probable transcriptional regulator syrB3 (151 aa).

Residues 1–65 (MVDESNAGPV…QERSEKLRLI (65 aa)) form a disordered region. Over residues 7 to 23 (AGPVAPAVVADAEVKAP) the composition is skewed to low complexity. A compositionally biased stretch (basic and acidic residues) spans 52–65 (GYSEQERSEKLRLI).

Belongs to the SyrB family.

The chain is Probable transcriptional regulator syrB3 (syrB3) from Rhizobium meliloti (strain 1021) (Ensifer meliloti).